Here is a 181-residue protein sequence, read N- to C-terminus: Regulator of G-protein signaling 5 (181 aa).

Positions 64 to 180 (SLDKLLQNNY…VRSEFYQEFI (117 aa)) constitute an RGS domain.

It localises to the cytoplasm. Its subcellular location is the membrane. Inhibits signal transduction by increasing the GTPase activity of G protein alpha subunits thereby driving them into their inactive GDP-bound form. Binds to G(i)-alpha and G(o)-alpha, but not to G(s)-alpha. The protein is Regulator of G-protein signaling 5 (RGS5) of Sus scrofa (Pig).